We begin with the raw amino-acid sequence, 231 residues long: Large ribosomal subunit protein uL1 (231 aa).

The protein belongs to the universal ribosomal protein uL1 family. As to quaternary structure, part of the 50S ribosomal subunit.

Functionally, binds directly to 23S rRNA. The L1 stalk is quite mobile in the ribosome, and is involved in E site tRNA release. Protein L1 is also a translational repressor protein, it controls the translation of the L11 operon by binding to its mRNA. The polypeptide is Large ribosomal subunit protein uL1 (Halalkalibacterium halodurans (strain ATCC BAA-125 / DSM 18197 / FERM 7344 / JCM 9153 / C-125) (Bacillus halodurans)).